Consider the following 342-residue polypeptide: Holliday junction branch migration complex subunit RuvB (342 aa).

Residues 4–182 are large ATPase domain (RuvB-L); it reads TDRLLSAGRR…FGIPIRLQFY (179 aa). 9 residues coordinate ATP: leucine 21, arginine 22, glycine 63, lysine 66, threonine 67, threonine 68, arginine 172, tyrosine 182, and arginine 219. Mg(2+) is bound at residue threonine 67. The segment at 183–253 is small ATPAse domain (RuvB-S); it reads TVEELERVVS…VADQSLNRLE (71 aa). A head domain (RuvB-H) region spans residues 256–342; that stretch reads NLGLDAMDRR…EAGQDGLFDV (87 aa). The DNA site is built by arginine 292, arginine 311, and arginine 316.

This sequence belongs to the RuvB family. In terms of assembly, homohexamer. Forms an RuvA(8)-RuvB(12)-Holliday junction (HJ) complex. HJ DNA is sandwiched between 2 RuvA tetramers; dsDNA enters through RuvA and exits via RuvB. An RuvB hexamer assembles on each DNA strand where it exits the tetramer. Each RuvB hexamer is contacted by two RuvA subunits (via domain III) on 2 adjacent RuvB subunits; this complex drives branch migration. In the full resolvosome a probable DNA-RuvA(4)-RuvB(12)-RuvC(2) complex forms which resolves the HJ.

The protein localises to the cytoplasm. It carries out the reaction ATP + H2O = ADP + phosphate + H(+). In terms of biological role, the RuvA-RuvB-RuvC complex processes Holliday junction (HJ) DNA during genetic recombination and DNA repair, while the RuvA-RuvB complex plays an important role in the rescue of blocked DNA replication forks via replication fork reversal (RFR). RuvA specifically binds to HJ cruciform DNA, conferring on it an open structure. The RuvB hexamer acts as an ATP-dependent pump, pulling dsDNA into and through the RuvAB complex. RuvB forms 2 homohexamers on either side of HJ DNA bound by 1 or 2 RuvA tetramers; 4 subunits per hexamer contact DNA at a time. Coordinated motions by a converter formed by DNA-disengaged RuvB subunits stimulates ATP hydrolysis and nucleotide exchange. Immobilization of the converter enables RuvB to convert the ATP-contained energy into a lever motion, pulling 2 nucleotides of DNA out of the RuvA tetramer per ATP hydrolyzed, thus driving DNA branch migration. The RuvB motors rotate together with the DNA substrate, which together with the progressing nucleotide cycle form the mechanistic basis for DNA recombination by continuous HJ branch migration. Branch migration allows RuvC to scan DNA until it finds its consensus sequence, where it cleaves and resolves cruciform DNA. This Rhizorhabdus wittichii (strain DSM 6014 / CCUG 31198 / JCM 15750 / NBRC 105917 / EY 4224 / RW1) (Sphingomonas wittichii) protein is Holliday junction branch migration complex subunit RuvB.